We begin with the raw amino-acid sequence, 343 residues long: 4-hydroxy-2-oxovalerate aldolase 4 (343 aa).

A Pyruvate carboxyltransferase domain is found at 8-260 (VTVHDMTLRD…ETGVDVAKIT (253 aa)). Position 16 to 17 (16 to 17 (RD)) interacts with substrate. Residue Asp17 participates in Mn(2+) binding. His20 acts as the Proton acceptor in catalysis. Ser170 and His199 together coordinate substrate. Residues His199 and His201 each contribute to the Mn(2+) site. Tyr290 provides a ligand contact to substrate.

It belongs to the 4-hydroxy-2-oxovalerate aldolase family.

The catalysed reaction is (S)-4-hydroxy-2-oxopentanoate = acetaldehyde + pyruvate. The polypeptide is 4-hydroxy-2-oxovalerate aldolase 4 (Dechloromonas aromatica (strain RCB)).